The primary structure comprises 472 residues: MIPRIMSTQHPDNYSIPFFASSPILEGEDEITEAFYAFSVLGADEQMWDFEGKEVDEFVVKKLLERYPTFFKNNILGKDIRLTPRVPNPSVEKEEAKLLLETLQGIARSADYARIFYGDNIAPIFEVILPMTTSVEEIERVYWLYKKAVVWISREKIYDITVREWIGDFFPEKINVIPLFETKSALIKAAKITEAYILNRKNDIEYQRVFFARSDPAMNYGLITAVTYVKRALYEVLKVEEELSIPIYPIIGVGGPPLRGGMRPDNVDAVVKEYPSVQTFTIQSSFKYDYPTKDVVKAVEKIKSTKRKLPIPVEIPPFLVNYEAEYQKQIRILAPYINSVAKRIPRRRKRKLHIGLFGYSRNVNGITLPRAITFTAALYSIGIPPELLALNSLTDSQLETISEYYINVYEDLEFAMRFFSPKVAEKVGLKELAERVKEFKPEQIPEYIEEAEIVFKGEGDVMKLAQLRGFLG.

It belongs to the PEPCase type 2 family. As to quaternary structure, homotetramer. The cofactor is Mg(2+).

The catalysed reaction is oxaloacetate + phosphate = phosphoenolpyruvate + hydrogencarbonate. Catalyzes the irreversible beta-carboxylation of phosphoenolpyruvate (PEP) to form oxaloacetate (OAA), a four-carbon dicarboxylic acid source for the tricarboxylic acid cycle. This chain is Phosphoenolpyruvate carboxylase, found in Pyrococcus furiosus (strain ATCC 43587 / DSM 3638 / JCM 8422 / Vc1).